Consider the following 375-residue polypeptide: Queuine tRNA-ribosyltransferase (375 aa).

The Proton acceptor role is filled by D89. Residues D89–F93, D143, Q187, and G214 contribute to the substrate site. The tract at residues G245–D251 is RNA binding. Catalysis depends on D264, which acts as the Nucleophile. The RNA binding; important for wobble base 34 recognition stretch occupies residues T269–R273. Residues C302, C304, C307, and H333 each coordinate Zn(2+).

Belongs to the queuine tRNA-ribosyltransferase family. Homodimer. Within each dimer, one monomer is responsible for RNA recognition and catalysis, while the other monomer binds to the replacement base PreQ1. The cofactor is Zn(2+).

It carries out the reaction 7-aminomethyl-7-carbaguanine + guanosine(34) in tRNA = 7-aminomethyl-7-carbaguanosine(34) in tRNA + guanine. It functions in the pathway tRNA modification; tRNA-queuosine biosynthesis. Functionally, catalyzes the base-exchange of a guanine (G) residue with the queuine precursor 7-aminomethyl-7-deazaguanine (PreQ1) at position 34 (anticodon wobble position) in tRNAs with GU(N) anticodons (tRNA-Asp, -Asn, -His and -Tyr). Catalysis occurs through a double-displacement mechanism. The nucleophile active site attacks the C1' of nucleotide 34 to detach the guanine base from the RNA, forming a covalent enzyme-RNA intermediate. The proton acceptor active site deprotonates the incoming PreQ1, allowing a nucleophilic attack on the C1' of the ribose to form the product. After dissociation, two additional enzymatic reactions on the tRNA convert PreQ1 to queuine (Q), resulting in the hypermodified nucleoside queuosine (7-(((4,5-cis-dihydroxy-2-cyclopenten-1-yl)amino)methyl)-7-deazaguanosine). This Salmonella paratyphi A (strain ATCC 9150 / SARB42) protein is Queuine tRNA-ribosyltransferase.